Here is a 417-residue protein sequence, read N- to C-terminus: Gamma-glutamyl phosphate reductase (417 aa).

It belongs to the gamma-glutamyl phosphate reductase family.

It is found in the cytoplasm. The catalysed reaction is L-glutamate 5-semialdehyde + phosphate + NADP(+) = L-glutamyl 5-phosphate + NADPH + H(+). Its pathway is amino-acid biosynthesis; L-proline biosynthesis; L-glutamate 5-semialdehyde from L-glutamate: step 2/2. Catalyzes the NADPH-dependent reduction of L-glutamate 5-phosphate into L-glutamate 5-semialdehyde and phosphate. The product spontaneously undergoes cyclization to form 1-pyrroline-5-carboxylate. This chain is Gamma-glutamyl phosphate reductase, found in Escherichia coli O127:H6 (strain E2348/69 / EPEC).